A 215-amino-acid chain; its full sequence is Cytochrome b6 (215 aa).

The chain crosses the membrane as a helical span at residues 32-52 (IFYCLGGITFTSFVIQVASGF). Cysteine 35 serves as a coordination point for heme c. Heme b contacts are provided by histidine 86 and histidine 100. Helical transmembrane passes span 90–110 (ASMMVLMMILHIFRVYLTGGF), 116–136 (LTWVTGVILSVLTVSFGVTGY), and 186–206 (LHTFVLPLLTAVFMLMHFLMI). Histidine 187 and histidine 202 together coordinate heme b.

Belongs to the cytochrome b family. PetB subfamily. The 4 large subunits of the cytochrome b6-f complex are cytochrome b6, subunit IV (17 kDa polypeptide, PetD), cytochrome f and the Rieske protein, while the 4 small subunits are PetG, PetL, PetM and PetN. The complex functions as a dimer. Requires heme b as cofactor. Heme c is required as a cofactor.

The protein resides in the plastid. Its subcellular location is the chloroplast thylakoid membrane. Functionally, component of the cytochrome b6-f complex, which mediates electron transfer between photosystem II (PSII) and photosystem I (PSI), cyclic electron flow around PSI, and state transitions. This Chaetosphaeridium globosum (Charophycean green alga) protein is Cytochrome b6.